Here is a 903-residue protein sequence, read N- to C-terminus: Protein translocase subunit SecA (903 aa).

ATP contacts are provided by residues Gln-89, 107–111 (GEGKT), and Asp-502. Cys-887, Cys-889, Cys-898, and His-899 together coordinate Zn(2+).

Belongs to the SecA family. As to quaternary structure, monomer and homodimer. Part of the essential Sec protein translocation apparatus which comprises SecA, SecYEG and auxiliary proteins SecDF-YajC and YidC. Zn(2+) is required as a cofactor.

The protein localises to the cell inner membrane. Its subcellular location is the cytoplasm. It carries out the reaction ATP + H2O + cellular proteinSide 1 = ADP + phosphate + cellular proteinSide 2.. In terms of biological role, part of the Sec protein translocase complex. Interacts with the SecYEG preprotein conducting channel. Has a central role in coupling the hydrolysis of ATP to the transfer of proteins into and across the cell membrane, serving both as a receptor for the preprotein-SecB complex and as an ATP-driven molecular motor driving the stepwise translocation of polypeptide chains across the membrane. In Jannaschia sp. (strain CCS1), this protein is Protein translocase subunit SecA.